A 281-amino-acid polypeptide reads, in one-letter code: Bifunctional protein FolD (281 aa).

Residues 165-167 (GRG), Thr-192, and Val-233 contribute to the NADP(+) site.

The protein belongs to the tetrahydrofolate dehydrogenase/cyclohydrolase family. In terms of assembly, homodimer.

The catalysed reaction is (6R)-5,10-methylene-5,6,7,8-tetrahydrofolate + NADP(+) = (6R)-5,10-methenyltetrahydrofolate + NADPH. It catalyses the reaction (6R)-5,10-methenyltetrahydrofolate + H2O = (6R)-10-formyltetrahydrofolate + H(+). It participates in one-carbon metabolism; tetrahydrofolate interconversion. In terms of biological role, catalyzes the oxidation of 5,10-methylenetetrahydrofolate to 5,10-methenyltetrahydrofolate and then the hydrolysis of 5,10-methenyltetrahydrofolate to 10-formyltetrahydrofolate. This is Bifunctional protein FolD from Mycobacteroides abscessus (strain ATCC 19977 / DSM 44196 / CCUG 20993 / CIP 104536 / JCM 13569 / NCTC 13031 / TMC 1543 / L948) (Mycobacterium abscessus).